Consider the following 414-residue polypeptide: Histidine--tRNA ligase (414 aa).

Belongs to the class-II aminoacyl-tRNA synthetase family. Homodimer.

It localises to the cytoplasm. It catalyses the reaction tRNA(His) + L-histidine + ATP = L-histidyl-tRNA(His) + AMP + diphosphate + H(+). This chain is Histidine--tRNA ligase, found in Mycoplasma mycoides subsp. mycoides SC (strain CCUG 32753 / NCTC 10114 / PG1).